The chain runs to 373 residues: MPGWSCLVTGAGGFLGQRIVQMLVQEKELQEVRVLYRTFSPKHKEELSKLQTKAKVTVLRGDIVDAQFLRRACQGMSVIIHTAAALDIAGFLPRQTILDVNVKGTQLLLDACVEASVPAFIYSSSTGVAGPNSYKETILNDREEEHRESTWSNPYPYSKRMAEKAVLAANGSILKNGGTFHTCALRLPFIYGEESQIISTMVNRALKNNSIIKRHATFSIANPVYVGNAAWAHILAARGLRDPEKSQSIQGQFYYISDDTPHQSYDDLNYTLSKEWGFCLDSSWSLPLPLLYWLAFLLETVSFLLRPFYNYRPPFNRFMVTILNSVFTISYKKAQRDLGYEPLVSWEEAKQKTSEWIGTLVEQHRETLDTKSQ.

Residues 10-15 (GAGGFL), tyrosine 155, and lysine 159 contribute to the NADP(+) site. Catalysis depends on lysine 159, which acts as the Proton donor. A helical transmembrane segment spans residues 288 to 308 (LPLLYWLAFLLETVSFLLRPF). Lysine 350 is subject to N6-acetyllysine.

The protein belongs to the 3-beta-HSD family. In terms of tissue distribution, expressed predominantly in male liver.

Its subcellular location is the endoplasmic reticulum membrane. The protein resides in the mitochondrion membrane. The catalysed reaction is a 3beta-hydroxysteroid + NADP(+) = a 3-oxosteroid + NADPH + H(+). The enzyme catalyses 5alpha-androstane-3beta,17beta-diol + NADP(+) = 17beta-hydroxy-5alpha-androstan-3-one + NADPH + H(+). It carries out the reaction 3beta-hydroxy-5alpha-androstan-17-one + NADP(+) = 5alpha-androstan-3,17-dione + NADPH + H(+). The protein operates within steroid metabolism. Its function is as follows. Responsible for the reduction of the oxo group on the C-3 of 5alpha-androstane steroids. Catalyzes the conversion of dihydrotestosterone to its inactive form 5alpha-androstanediol, that does not bind androgen receptor/AR. Also converts androstanedione, a precursor of testosterone and estrone, to epiandrosterone. Does not function as an isomerase. The protein is NADPH-dependent 3-keto-steroid reductase Hsd3b5 of Rattus norvegicus (Rat).